The following is a 247-amino-acid chain: 2,3-bisphosphoglycerate-dependent phosphoglycerate mutase (247 aa).

Substrate contacts are provided by residues 8–15, 21–22, Arg60, 87–90, Lys98, 114–115, and 183–184; these read RHGESQWN, TG, ERHY, RR, and GN. His9 functions as the Tele-phosphohistidine intermediate in the catalytic mechanism. The Proton donor/acceptor role is filled by Glu87.

This sequence belongs to the phosphoglycerate mutase family. BPG-dependent PGAM subfamily.

The enzyme catalyses (2R)-2-phosphoglycerate = (2R)-3-phosphoglycerate. The protein operates within carbohydrate degradation; glycolysis; pyruvate from D-glyceraldehyde 3-phosphate: step 3/5. Catalyzes the interconversion of 2-phosphoglycerate and 3-phosphoglycerate. This is 2,3-bisphosphoglycerate-dependent phosphoglycerate mutase from Chlorobaculum parvum (strain DSM 263 / NCIMB 8327) (Chlorobium vibrioforme subsp. thiosulfatophilum).